Consider the following 476-residue polypeptide: PTS system N-acetylmuramic acid-specific EIIBC component (476 aa).

Residues 1–89 (MATIDNAMIH…KASLGDNMSS (89 aa)) enclose the PTS EIIB type-1 domain. C28 functions as the Phosphocysteine intermediate; for EIIB activity in the catalytic mechanism. The 361-residue stretch at 116–476 (AKFATIFTPL…FFATKDVDLS (361 aa)) folds into the PTS EIIC type-1 domain. Transmembrane regions (helical) follow at residues 118-138 (FATI…LLGL), 160-180 (LIAY…ILIG), 186-206 (AFGG…LGYN), 220-240 (FFGL…AAIV), 265-285 (TLLI…VYLF), 304-324 (VLAG…FVPV), 337-357 (LFPV…ALYF), 371-391 (GAII…VTLP), 396-416 (FITA…IAYL), and 443-463 (VLPA…TGFI).

The protein resides in the cell inner membrane. The catalysed reaction is N-acetyl-beta-D-muramate(out) + N(pros)-phospho-L-histidyl-[protein] = N-acetyl-beta-D-muramate 6-phosphate(in) + L-histidyl-[protein]. The phosphoenolpyruvate-dependent sugar phosphotransferase system (sugar PTS), a major carbohydrate active transport system, catalyzes the phosphorylation of incoming sugar substrates concomitantly with their translocation across the cell membrane. This system is involved in N-acetylmuramic acid (MurNAc) transport, yielding cytoplasmic MurNAc-6-P. Is also able to take up anhydro-N-acetylmuramic acid (anhMurNAc), but cannot phosphorylate the carbon 6, probably because of the 1,6-anhydro ring. This chain is PTS system N-acetylmuramic acid-specific EIIBC component (murP), found in Pasteurella multocida (strain Pm70).